The chain runs to 284 residues: Transcription factor lir-3 (284 aa).

The span at 50–60 shows a compositional bias: basic and acidic residues; that stretch reads EPRISRDELRE. The segment at 50–71 is disordered; that stretch reads EPRISRDELRETASSPVTFETR. The C2H2-type zinc-finger motif lies at 224 to 247; it reads YKCKQCDYLDYRKSTMRKHTVSQH.

As to expression, expressed in FLP neurons.

The protein localises to the nucleus. Functionally, positively regulates the RNA polymerase III-associated transcription of small non-coding RNAs. The protein is Transcription factor lir-3 of Caenorhabditis elegans.